The sequence spans 805 residues: Mediator of RNA polymerase II transcription subunit 25 (805 aa).

2 disordered regions span residues 308 to 332 and 647 to 691; these read NQMPPTSAVGTPFNQPPPPAMPQNT and QQPQ…NPQL. Low complexity predominate over residues 647 to 678; the sequence is QQPQQAASQAPPQATQTTVQAPGQPQNPQPGA. Residues 691–695 carry the LXXLL motif motif; that stretch reads LRNLL.

It belongs to the Mediator complex subunit 25 family. In terms of assembly, component of the Mediator complex.

Its subcellular location is the nucleus. Its function is as follows. Component of the Mediator complex, a coactivator involved in the regulated transcription of nearly all RNA polymerase II-dependent genes. Mediator functions as a bridge to convey information from gene-specific regulatory proteins to the basal RNA polymerase II transcription machinery. Mediator is recruited to promoters by direct interactions with regulatory proteins and serves as a scaffold for the assembly of a functional preinitiation complex with RNA polymerase II and the general transcription factors. The protein is Mediator of RNA polymerase II transcription subunit 25 (med25) of Xenopus tropicalis (Western clawed frog).